Here is a 338-residue protein sequence, read N- to C-terminus: Phosphoribosylformylglycinamidine cyclo-ligase (338 aa).

This sequence belongs to the AIR synthase family.

The protein resides in the cytoplasm. The enzyme catalyses 2-formamido-N(1)-(5-O-phospho-beta-D-ribosyl)acetamidine + ATP = 5-amino-1-(5-phospho-beta-D-ribosyl)imidazole + ADP + phosphate + H(+). It functions in the pathway purine metabolism; IMP biosynthesis via de novo pathway; 5-amino-1-(5-phospho-D-ribosyl)imidazole from N(2)-formyl-N(1)-(5-phospho-D-ribosyl)glycinamide: step 2/2. The chain is Phosphoribosylformylglycinamidine cyclo-ligase from Thermoplasma volcanium (strain ATCC 51530 / DSM 4299 / JCM 9571 / NBRC 15438 / GSS1).